A 395-amino-acid chain; its full sequence is Phosphoglycerate kinase (395 aa).

Substrate is bound by residues 21-23 (DLN), arginine 36, 59-62 (HLGR), arginine 113, and arginine 146. Residues lysine 197, glutamate 324, and 350–353 (GGDT) contribute to the ATP site.

The protein belongs to the phosphoglycerate kinase family. Monomer.

It is found in the cytoplasm. The enzyme catalyses (2R)-3-phosphoglycerate + ATP = (2R)-3-phospho-glyceroyl phosphate + ADP. The protein operates within carbohydrate degradation; glycolysis; pyruvate from D-glyceraldehyde 3-phosphate: step 2/5. The sequence is that of Phosphoglycerate kinase from Acinetobacter baumannii (strain ATCC 17978 / DSM 105126 / CIP 53.77 / LMG 1025 / NCDC KC755 / 5377).